We begin with the raw amino-acid sequence, 176 residues long: NADH-quinone oxidoreductase subunit I 1 (176 aa).

4Fe-4S ferredoxin-type domains are found at residues I45 to T77 and R87 to D116. The [4Fe-4S] cluster site is built by C57, C60, C63, C67, C96, C99, C102, and C106.

The protein belongs to the complex I 23 kDa subunit family. In terms of assembly, NDH-1 is composed of 14 different subunits. Subunits NuoA, H, J, K, L, M, N constitute the membrane sector of the complex. [4Fe-4S] cluster serves as cofactor.

The protein resides in the cell inner membrane. It catalyses the reaction a quinone + NADH + 5 H(+)(in) = a quinol + NAD(+) + 4 H(+)(out). In terms of biological role, NDH-1 shuttles electrons from NADH, via FMN and iron-sulfur (Fe-S) centers, to quinones in the respiratory chain. The immediate electron acceptor for the enzyme in this species is believed to be ubiquinone. Couples the redox reaction to proton translocation (for every two electrons transferred, four hydrogen ions are translocated across the cytoplasmic membrane), and thus conserves the redox energy in a proton gradient. This is NADH-quinone oxidoreductase subunit I 1 from Geobacter metallireducens (strain ATCC 53774 / DSM 7210 / GS-15).